A 637-amino-acid polypeptide reads, in one-letter code: Chaperone protein dnaK2 (637 aa).

T197 bears the Phosphothreonine; by autocatalysis mark. Residues 602–637 (AAAGGAAPGGDAGASAASGGGDASDDVIDAEFTETK) form a disordered region. The segment covering 603 to 623 (AAGGAAPGGDAGASAASGGGD) has biased composition (gly residues). Residues 624 to 637 (ASDDVIDAEFTETK) show a composition bias toward acidic residues.

The protein belongs to the heat shock protein 70 family.

Acts as a chaperone. This chain is Chaperone protein dnaK2 (dnaK2), found in Parasynechococcus marenigrum (strain WH8102).